The sequence spans 527 residues: Phosphoenolpyruvate carboxykinase (ATP) (527 aa).

Residues arginine 56, tyrosine 191, and lysine 197 each coordinate substrate. Residues lysine 197, histidine 216, and 232–240 (GLSGTGKTT) each bind ATP. The Mn(2+) site is built by lysine 197 and histidine 216. Aspartate 253 lines the Mn(2+) pocket. Residues glutamate 281, arginine 318, 437-438 (RI), and threonine 443 each bind ATP. Arginine 318 contacts substrate.

Belongs to the phosphoenolpyruvate carboxykinase (ATP) family. It depends on Mn(2+) as a cofactor.

The protein localises to the cytoplasm. The catalysed reaction is oxaloacetate + ATP = phosphoenolpyruvate + ADP + CO2. The protein operates within carbohydrate biosynthesis; gluconeogenesis. Functionally, involved in the gluconeogenesis. Catalyzes the conversion of oxaloacetate (OAA) to phosphoenolpyruvate (PEP) through direct phosphoryl transfer between the nucleoside triphosphate and OAA. The protein is Phosphoenolpyruvate carboxykinase (ATP) of Shouchella clausii (strain KSM-K16) (Alkalihalobacillus clausii).